Reading from the N-terminus, the 564-residue chain is Pumilio homolog 9 (564 aa).

Residues 222-564 (LEDTVLIGQG…KIFSKTILKK (343 aa)) form the PUM-HD domain. 8 Pumilio repeats span residues 249 to 284 (EIYG…VILL), 285 to 320 (AIID…LIVS), 321 to 359 (VLTS…ALVK), 361 to 396 (GLKP…FVLE), 397 to 432 (AATK…RLVA), 433 to 469 (EISR…VQFR), 470 to 501 (MHYA…EIVR), and 502 to 539 (ELLC…KLVA).

Its subcellular location is the cytoplasm. Sequence-specific RNA-binding protein that regulates translation and mRNA stability by binding the 3'-UTR of target mRNAs. The sequence is that of Pumilio homolog 9 (APUM9) from Arabidopsis thaliana (Mouse-ear cress).